A 204-amino-acid polypeptide reads, in one-letter code: Ancillary SecYEG translocon subunit (204 aa).

Topologically, residues 1–23 (MAYTIEEEQELTAIKAWWNENYK) are cytoplasmic. A helical transmembrane segment spans residues 24–44 (FIIVCFVIAFGGVFGWNYWQS). At 45 to 204 (HQIQKMHKAS…QLIQVRLNNL (160 aa)) the chain is on the periplasmic side.

The protein belongs to the YfgM family. Interacts with the SecYEG translocon. Forms a complex with PpiD.

It is found in the cell inner membrane. In terms of biological role, may mediate protein transfer from the SecYEG translocon to the periplasmic chaperone network via its periplasmic C-terminal region. The chain is Ancillary SecYEG translocon subunit (1057) from Aggregatibacter actinomycetemcomitans (Actinobacillus actinomycetemcomitans).